A 420-amino-acid chain; its full sequence is UDP-N-acetylglucosamine 1-carboxyvinyltransferase (420 aa).

22 to 23 (KN) provides a ligand contact to phosphoenolpyruvate. Arg93 contacts UDP-N-acetyl-alpha-D-glucosamine. Cys117 functions as the Proton donor in the catalytic mechanism. Cys117 carries the post-translational modification 2-(S-cysteinyl)pyruvic acid O-phosphothioketal. UDP-N-acetyl-alpha-D-glucosamine contacts are provided by Asp307 and Val329.

It belongs to the EPSP synthase family. MurA subfamily.

The protein resides in the cytoplasm. It carries out the reaction phosphoenolpyruvate + UDP-N-acetyl-alpha-D-glucosamine = UDP-N-acetyl-3-O-(1-carboxyvinyl)-alpha-D-glucosamine + phosphate. Its pathway is cell wall biogenesis; peptidoglycan biosynthesis. Functionally, cell wall formation. Adds enolpyruvyl to UDP-N-acetylglucosamine. The protein is UDP-N-acetylglucosamine 1-carboxyvinyltransferase of Marinobacter nauticus (strain ATCC 700491 / DSM 11845 / VT8) (Marinobacter aquaeolei).